Consider the following 124-residue polypeptide: Small ribosomal subunit protein uS12 (124 aa).

Aspartate 89 is subject to 3-methylthioaspartic acid. Positions 105-124 are disordered; it reads QGVKNRKQARSRYGAKKEKS. Residues 108 to 118 show a composition bias toward basic residues; the sequence is KNRKQARSRYG.

It belongs to the universal ribosomal protein uS12 family. In terms of assembly, part of the 30S ribosomal subunit. Contacts proteins S8 and S17. May interact with IF1 in the 30S initiation complex.

In terms of biological role, with S4 and S5 plays an important role in translational accuracy. Interacts with and stabilizes bases of the 16S rRNA that are involved in tRNA selection in the A site and with the mRNA backbone. Located at the interface of the 30S and 50S subunits, it traverses the body of the 30S subunit contacting proteins on the other side and probably holding the rRNA structure together. The combined cluster of proteins S8, S12 and S17 appears to hold together the shoulder and platform of the 30S subunit. In Mycobacteroides abscessus (strain ATCC 19977 / DSM 44196 / CCUG 20993 / CIP 104536 / JCM 13569 / NCTC 13031 / TMC 1543 / L948) (Mycobacterium abscessus), this protein is Small ribosomal subunit protein uS12.